A 248-amino-acid polypeptide reads, in one-letter code: Gamma-interferon-inducible lysosomal thiol reductase (248 aa).

Positions 1–26 (MSWSPILPFLSLLLLLFPLEVPRAAT) are cleaved as a signal peptide. The propeptide at 27–54 (ASLSQASSEGTTTCKAHDVCLLGPRPLP) is removed in mature form. C69 and C72 are disulfide-bonded. N-linked (GlcNAc...) asparagine glycans are attached at residues N92 and N105. Residues 231 to 248 (KPDICSSIADSPRKVCYK) constitute a propeptide, removed in mature form.

It belongs to the GILT family. In terms of assembly, dimer; disulfide-linked. In terms of processing, N-glycosylated. Sugar chains contain mannose-6-phosphate. Synthesized as a 35 kDa precursor which is then processed into the mature 30 kDa form via cleavage of N-terminal and C-terminal propeptides. Processing of the precursor is mediated by multiple lysosomal proteases.

The protein localises to the secreted. The protein resides in the lysosome. Its function is as follows. Lysosomal thiol reductase that can reduce protein disulfide bonds. May facilitate the complete unfolding of proteins destined for lysosomal degradation. Plays an important role in antigen processing. Facilitates the generation of MHC class II-restricted epitodes from disulfide bond-containing antigen by the endocytic reduction of disulfide bonds. Also facilitates MHC class I-restricted recognition of exogenous antigens containing disulfide bonds by CD8+ T-cells or crosspresentation. The sequence is that of Gamma-interferon-inducible lysosomal thiol reductase (Ifi30) from Mus musculus (Mouse).